The chain runs to 56 residues: Large ribosomal subunit protein bL32 (56 aa).

Belongs to the bacterial ribosomal protein bL32 family.

The protein is Large ribosomal subunit protein bL32 of Prochlorococcus marinus (strain MIT 9215).